A 127-amino-acid chain; its full sequence is Transcription antitermination protein NusB (127 aa).

Belongs to the NusB family.

Functionally, involved in transcription antitermination. Required for transcription of ribosomal RNA (rRNA) genes. Binds specifically to the boxA antiterminator sequence of the ribosomal RNA (rrn) operons. In Lysinibacillus sphaericus (strain C3-41), this protein is Transcription antitermination protein NusB.